The sequence spans 779 residues: LPS-assembly protein LptD (779 aa).

The first 23 residues, 1-23, serve as a signal peptide directing secretion; sequence MKIRYSVLSTFIISALYSQDTQA.

It belongs to the LptD family. Component of the lipopolysaccharide transport and assembly complex. Interacts with LptE and LptA.

It localises to the cell outer membrane. In terms of biological role, together with LptE, is involved in the assembly of lipopolysaccharide (LPS) at the surface of the outer membrane. In Haemophilus ducreyi (strain 35000HP / ATCC 700724), this protein is LPS-assembly protein LptD.